Consider the following 645-residue polypeptide: Homeobox protein B-H2 (645 aa).

Disordered regions lie at residues 1-50 (MTTM…TTAT), 86-134 (SSGG…QAAL), 149-176 (RERE…AHHP), 240-259 (SHLS…HDER), 265-385 (MLQQ…KART), and 553-645 (GAQQ…ALEV). Low complexity predominate over residues 18–29 (SAPSATAHHPAA). Over residues 106–121 (QHHHHHQQQQQHHHHQ) the composition is skewed to basic residues. The segment covering 122 to 134 (QQQQQQQHQQAAL) has biased composition (low complexity). The segment covering 149–165 (REREREREREHYRERHS) has biased composition (basic and acidic residues). The span at 244 to 253 (HQQHHPHLHH) shows a compositional bias: basic residues. The span at 275–316 (NNNNNNNNSSSASNNNNNNNNSASANSNIISGNSSSSNNNNG) shows a compositional bias: low complexity. A compositionally biased stretch (gly residues) spans 317–328 (SGNGNMLLGGPG). Residues 329-339 (SSISGDQASTI) show a composition bias toward polar residues. Over residues 362–377 (SSANGDSSSHLSLSLS) the composition is skewed to low complexity. Positions 380–439 (QRKARTAFTDHQLQTLEKSFERQKYLSVQDRMELANKLELSDCQVKTWYQNRRTKWKRQT) form a DNA-binding region, homeobox. Residues 553–574 (GAQQQQQQPPAASRSPATSQSA) show a composition bias toward low complexity. Positions 583–592 (TSSSSRQRLI) are enriched in polar residues. Thr593 carries the phosphothreonine modification. Pro residues predominate over residues 594 to 603 (PSPPLNPGSP). Phosphoserine occurs at positions 595 and 602. Over residues 618–632 (DEERDIERERERERE) the composition is skewed to basic and acidic residues. Residues 633–645 (RDEDDEEELALEV) show a composition bias toward acidic residues.

The protein belongs to the Antp homeobox family. B-H1 and B-H2 are abundant in the eye-antenna imaginal disk. Expressed in R1 and R6 cells throughout larval stage until 30 hours after puparium formation, at which time expression is seen in the anterior and posterior primary pigment cells. Coexpressed in embryonic glial cells, neurons of the CNS and PNS, most latitudinal anterior cells of the developing notum and the central circular region of the leg and antennal imaginal disk throughout larval development.

The protein resides in the nucleus. Functionally, B-H1 and B-H2 are regulated by members of the wg signaling pathway; wg and dpp. B-H1 and B-H2 are coexpressed and functionally required in R1 and R6 receptor cells and primary pigment cells for normal eye development. Coexpression is also required for the fate determination of external sensory organs, formation of notal microchaetae, formation of presutural macrochaetae, antennal development and for distal leg morphogenesis; segmentation and specification of tarsal segments 3-5. This is Homeobox protein B-H2 (B-H2) from Drosophila melanogaster (Fruit fly).